A 483-amino-acid polypeptide reads, in one-letter code: GTPase Der (483 aa).

EngA-type G domains are found at residues 3 to 167 and 212 to 387; these read FTVA…GEER and LRIA…EIWN. GTP contacts are provided by residues 9–16, 56–60, 119–122, 218–225, 265–269, and 330–333; these read GRPNVGKS, DTAGL, NKAE, GRPNAGKS, and NKWD. The 85-residue stretch at 388 to 472 folds into the KH-like domain; sequence RRVSTGRLNR…PIRLSLRTSD (85 aa).

This sequence belongs to the TRAFAC class TrmE-Era-EngA-EngB-Septin-like GTPase superfamily. EngA (Der) GTPase family. As to quaternary structure, associates with the 50S ribosomal subunit.

Functionally, GTPase that plays an essential role in the late steps of ribosome biogenesis. This Brucella anthropi (strain ATCC 49188 / DSM 6882 / CCUG 24695 / JCM 21032 / LMG 3331 / NBRC 15819 / NCTC 12168 / Alc 37) (Ochrobactrum anthropi) protein is GTPase Der.